Here is a 325-residue protein sequence, read N- to C-terminus: Ribosomal RNA small subunit methyltransferase C (325 aa).

It belongs to the methyltransferase superfamily. RsmC family. Monomer.

It is found in the cytoplasm. It catalyses the reaction guanosine(1207) in 16S rRNA + S-adenosyl-L-methionine = N(2)-methylguanosine(1207) in 16S rRNA + S-adenosyl-L-homocysteine + H(+). Functionally, specifically methylates the guanine in position 1207 of 16S rRNA in the 30S particle. The sequence is that of Ribosomal RNA small subunit methyltransferase C from Alcanivorax borkumensis (strain ATCC 700651 / DSM 11573 / NCIMB 13689 / SK2).